Here is a 136-residue protein sequence, read N- to C-terminus: Ribosome-binding factor A (136 aa).

The protein belongs to the RbfA family. In terms of assembly, monomer. Binds 30S ribosomal subunits, but not 50S ribosomal subunits or 70S ribosomes.

The protein resides in the cytoplasm. One of several proteins that assist in the late maturation steps of the functional core of the 30S ribosomal subunit. Associates with free 30S ribosomal subunits (but not with 30S subunits that are part of 70S ribosomes or polysomes). Required for efficient processing of 16S rRNA. May interact with the 5'-terminal helix region of 16S rRNA. The polypeptide is Ribosome-binding factor A (Yersinia enterocolitica serotype O:8 / biotype 1B (strain NCTC 13174 / 8081)).